The sequence spans 258 residues: Snake venom serine protease 3 (258 aa).

A signal peptide spans 1 to 18; it reads MVLIRVLANLLILQLSYA. The propeptide occupies 19–24; sequence QKSSEL. In terms of domain architecture, Peptidase S1 spans 25–249; it reads IIGGHPCNIN…YTDWIQSIIA (225 aa). Cystine bridges form between Cys31-Cys163, Cys50-Cys66, Cys98-Cys256, Cys142-Cys210, Cys174-Cys189, and Cys200-Cys225. N-linked (GlcNAc...) asparagine glycosylation is present at Asn44. Catalysis depends on charge relay system residues His65 and Asp110. Residue Ser204 is the Charge relay system of the active site. Asn239 carries N-linked (GlcNAc...) asparagine glycosylation.

This sequence belongs to the peptidase S1 family. Snake venom subfamily. As to quaternary structure, monomer. In terms of tissue distribution, expressed by the venom gland.

The protein resides in the secreted. In terms of biological role, snake venom serine protease that may act in the hemostasis system of the prey. The protein is Snake venom serine protease 3 of Protobothrops jerdonii (Jerdon's pitviper).